Consider the following 678-residue polypeptide: Amino-acid acetyltransferase, mitochondrial (678 aa).

The interval 86–111 (LKAQHPPKAQTEPTTGHSKGTVTQSL) is disordered. A compositionally biased stretch (polar residues) spans 96 to 111 (TEPTTGHSKGTVTQSL). In terms of domain architecture, N-acetyltransferase spans 499-668 (NRPRLSLDDP…YEQVCRSIQP (170 aa)).

Belongs to the acetyltransferase family.

Its subcellular location is the mitochondrion. The catalysed reaction is L-glutamate + acetyl-CoA = N-acetyl-L-glutamate + CoA + H(+). Its pathway is amino-acid biosynthesis; L-arginine biosynthesis; N(2)-acetyl-L-ornithine from L-glutamate: step 1/4. Functionally, N-acetylglutamate synthase involved in arginine biosynthesis. The chain is Amino-acid acetyltransferase, mitochondrial (arg2) from Aspergillus oryzae (strain ATCC 42149 / RIB 40) (Yellow koji mold).